The chain runs to 137 residues: Lysozyme (137 aa).

Positions 1–20 are cleaved as a signal peptide; the sequence is MSAVLVLALVLLSLTCVTDA. The region spanning 21–134 is the I-type lysozyme domain; that stretch reads ISDACLTCIC…WNAVKNQGCS (114 aa). 6 disulfides stabilise this stretch: C25–C102, C30–C37, C42–C51, C64–C84, C74–C80, and C98–C116. The active-site Proton donor is E33. The active-site Nucleophile is D45. 57-63 lines the substrate pocket; it reads KKSYWID. Substrate is bound by residues Y88 and 109 to 111; that span reads HNG.

The protein belongs to the glycosyl hydrolase 22 family. Type-I lysozyme subfamily.

It is found in the secreted. The catalysed reaction is Hydrolysis of (1-&gt;4)-beta-linkages between N-acetylmuramic acid and N-acetyl-D-glucosamine residues in a peptidoglycan and between N-acetyl-D-glucosamine residues in chitodextrins.. Has bacteriolytic activity. May play a role in digestion and in the host defense mechanisms against invading microbes. The polypeptide is Lysozyme (lysoz) (Ostrea edulis (Native oyster)).